A 427-amino-acid chain; its full sequence is Homoprotocatechuate catabolism bifunctional isomerase/decarboxylase (427 aa).

Approximate repeat units follow at residues 1 to 202 and 203 to 405; these read MKGT…LENP and VVDE…VGDE. A divalent metal cation contacts are provided by E276, E278, and D307.

This sequence belongs to the FAH family. In terms of assembly, monomer. The cofactor is Mg(2+).

The enzyme catalyses (2E,4Z)-5-hydroxypenta-2,4-diene-1,2,5-tricarboxylate = (3E,5R)-5-carboxy-2-oxohept-3-enedioate. It catalyses the reaction (3E,5R)-5-carboxy-2-oxohept-3-enedioate + H(+) = (4Z)-2-oxohept-4-enedioate + CO2. It participates in aromatic compound metabolism; 4-hydroxyphenylacetate degradation; pyruvate and succinate semialdehyde from 4-hydroxyphenylacetate: step 4/7. Its pathway is aromatic compound metabolism; 4-hydroxyphenylacetate degradation; pyruvate and succinate semialdehyde from 4-hydroxyphenylacetate: step 5/7. Decarboxylates OPET (5-oxo-pent-3-ene-1,2,5-tricarboxylic acid) into HHDD (2-hydroxy-hept-2,4-diene-1,7-dioate) and isomerizes it to OHED (2-oxo-hept-3-ene-1,7-dioate). This Escherichia coli protein is Homoprotocatechuate catabolism bifunctional isomerase/decarboxylase (hpcE).